We begin with the raw amino-acid sequence, 259 residues long: MRIALGLEYDGSNFSGWQSQKGVRTVQATLEQALSAVANEPVTVITAGRTDAGVHAAAQVVHFDTATFRLEHNWVFGGNANLLPEVAILWAQPVNEAFHARFSAIARHYRYIILNRGARPAIANRRVTWYCQPLSVTKMKEAGAFLVGEHDFSSFRAKACQAKSPVRNVHYLEVTRQGDWIVIDISANAFLHHMVRNIAGVLMAIGKGEQPPRWAEEVLQARCRAVGGVTARPDGLYLVRVDYPDHFDLPRLSRPVTVW.

Catalysis depends on D51, which acts as the Nucleophile. Substrate is bound at residue Y109.

The protein belongs to the tRNA pseudouridine synthase TruA family. As to quaternary structure, homodimer.

The enzyme catalyses uridine(38/39/40) in tRNA = pseudouridine(38/39/40) in tRNA. Its function is as follows. Formation of pseudouridine at positions 38, 39 and 40 in the anticodon stem and loop of transfer RNAs. In Nitrosococcus oceani (strain ATCC 19707 / BCRC 17464 / JCM 30415 / NCIMB 11848 / C-107), this protein is tRNA pseudouridine synthase A.